Reading from the N-terminus, the 142-residue chain is DNA-directed RNA polymerases I, II, and III subunit rpabc3 (142 aa).

A non-specific ssDNA binding region spans residues 16–40; it reads DPDGKKFDRVSRFVCYSENYEMDLQ.

Belongs to the eukaryotic RPB8 RNA polymerase subunit family. As to quaternary structure, component of the RNA polymerase I (Pol I), RNA polymerase II (Pol II) and RNA polymerase III (Pol III) complexes consisting of at least 13, 12 and 17 subunits, respectively. Directly interacts with POLR2A.

The protein localises to the nucleus. The protein resides in the nucleolus. Its function is as follows. DNA-dependent RNA polymerase catalyzes the transcription of DNA into RNA using the four ribonucleoside triphosphates as substrates. Common component of RNA polymerases I, II and III which synthesize ribosomal RNA precursors, mRNA precursors and many functional non-coding RNAs, and small RNAs, such as 5S rRNA and tRNAs, respectively. The protein is DNA-directed RNA polymerases I, II, and III subunit rpabc3 (polr2h) of Dictyostelium discoideum (Social amoeba).